A 268-amino-acid chain; its full sequence is 4-diphosphocytidyl-2-C-methyl-D-erythritol kinase (268 aa).

The active site involves K10. Residue 101 to 111 coordinates ATP; that stretch reads PTQAGLGGGST. D143 is an active-site residue.

It belongs to the GHMP kinase family. IspE subfamily.

The enzyme catalyses 4-CDP-2-C-methyl-D-erythritol + ATP = 4-CDP-2-C-methyl-D-erythritol 2-phosphate + ADP + H(+). It participates in isoprenoid biosynthesis; isopentenyl diphosphate biosynthesis via DXP pathway; isopentenyl diphosphate from 1-deoxy-D-xylulose 5-phosphate: step 3/6. Catalyzes the phosphorylation of the position 2 hydroxy group of 4-diphosphocytidyl-2C-methyl-D-erythritol. In Helicobacter acinonychis (strain Sheeba), this protein is 4-diphosphocytidyl-2-C-methyl-D-erythritol kinase.